The sequence spans 429 residues: Adenylosuccinate synthetase (429 aa).

GTP contacts are provided by residues 13–19 (GDEGKGK) and 41–43 (GHT). Aspartate 14 acts as the Proton acceptor in catalysis. Mg(2+) contacts are provided by aspartate 14 and glycine 41. Residues 14–17 (DEGK), 39–42 (NAGH), threonine 130, arginine 144, glutamine 224, threonine 239, and arginine 303 each bind IMP. The active-site Proton donor is histidine 42. A substrate-binding site is contributed by 299–305 (ATTGRAR). GTP contacts are provided by residues arginine 305, 331–333 (KLD), and 412–414 (STG).

It belongs to the adenylosuccinate synthetase family. As to quaternary structure, homodimer. Mg(2+) serves as cofactor.

It localises to the cytoplasm. It catalyses the reaction IMP + L-aspartate + GTP = N(6)-(1,2-dicarboxyethyl)-AMP + GDP + phosphate + 2 H(+). Its pathway is purine metabolism; AMP biosynthesis via de novo pathway; AMP from IMP: step 1/2. Plays an important role in the de novo pathway of purine nucleotide biosynthesis. Catalyzes the first committed step in the biosynthesis of AMP from IMP. In Psychrobacter sp. (strain PRwf-1), this protein is Adenylosuccinate synthetase.